Consider the following 1734-residue polypeptide: Complement C4-A (1734 aa).

Residues 1–19 (MRLLWGLAWVFSFCASSLQ) form the signal peptide. Cysteine 66 and cysteine 95 form a disulfide bridge. A glycan (N-linked (GlcNAc...) asparagine) is linked at asparagine 224. Cysteine 633 and cysteine 667 are oxidised to a cystine. Residues 674–677 (RQKR) constitute a propeptide that is removed on maturation. Intrachain disulfides connect cysteine 700-cysteine 726, cysteine 701-cysteine 733, and cysteine 714-cysteine 734. The 35-residue stretch at 700 to 734 (CCQDGMTKLPMKRTCEQRAARVPQQACREPFLSCC) folds into the Anaphylatoxin-like domain. Residues asparagine 743 and asparagine 859 are each glycosylated (N-linked (GlcNAc...) asparagine). The segment at residues 1002–1005 (CAEQ) is a cross-link (isoglutamyl cysteine thioester (Cys-Gln)). Residues asparagine 1128 and asparagine 1383 are each glycosylated (N-linked (GlcNAc...) asparagine). Tyrosine 1409 is subject to Sulfotyrosine. A propeptide spanning residues 1437–1443 (RRSRRRR) is cleaved from the precursor. 5 disulfide bridges follow: cysteine 1461–cysteine 1525, cysteine 1573–cysteine 1578, cysteine 1585–cysteine 1663, cysteine 1608–cysteine 1732, and cysteine 1708–cysteine 1717. An NTR domain is found at 1585–1732 (CPRLLRSLER…FLMEFSSRGC (148 aa)).

In absence of complement activation, circulates in blood as a disulfide-linked trimer of an alpha, beta and gamma chain. In terms of assembly, complement C4b is composed of Complement C4b-A, Complement C4 beta and Complement C4 gamma chains that are associated via disulfide bonds. Non-enzymatic component of the C3 convertase, also named C4bC2b, composed of the serine protease complement C2b (C2), as well as complement C4b. Non-enzymatic component of the C5 convertase, also named C4bC2bC3b, composed of the serine protease complement C2b (C2), complement C3b, as well as complement C4b. In terms of processing, prior to secretion, the single-chain precursor is enzymatically cleaved by plasminogen (PLG) to yield non-identical chains alpha, beta and gamma. During activation of the complement systems, the alpha chain is cleaved into C4a and C4b by different proteases depending on the complement pathway: C4b stays linked to the beta and gamma chains, while C4a is released in the plasma. The alpha chain is cleaved by C1S to generate C4a and C4b following activation by the classical complement system. The alpha chain is cleaved to generate C4a and C4b by MASP2 following activation by the lectin complement system. The alpha chain is cleaved by GZMK to generate C4a and C4b following activation by the GZMK complement system. Further degradation of C4b by C1 into the inactive fragments C4c and C4d blocks the generation of C3 convertase. The proteolytic cleavages often are incomplete so that many structural forms can be found in plasma. Post-translationally, upon activation, the internal thioester bond reacts with carbohydrate antigens on the target surface to form amide or ester bonds, leading to covalent association with the surface of pathogens. Complement C4b interacts with complement C3b via a thioester linkage. In terms of processing, N- and O-glycosylated. O-glycosylated with a core 1 or possibly core 8 glycan.

It localises to the secreted. The protein localises to the synapse. Its subcellular location is the cell projection. It is found in the axon. The protein resides in the dendrite. It localises to the cell surface. Its activity is regulated as follows. Specifically inhibited by nanobody hC4Nb8, inhibiting the classical complement pathway. Functionally, precursor of non-enzymatic components of the classical, lectin and GZMK complement pathways, which consist in a cascade of proteins that leads to phagocytosis and breakdown of pathogens and signaling that strengthens the adaptive immune system. Non-enzymatic component of C3 and C5 convertases. Generated following cleavage by complement proteases (C1S, MASP2 or GZMK, depending on the complement pathway), it covalently attaches to the surface of pathogens, where it acts as an opsonin that marks the surface of antigens for removal. It then recruits the serine protease complement C2b to form the C3 and C5 convertases, which cleave and activate C3 and C5, respectively, the next components of the complement pathways. Complement C4b-A isotype is responsible for effective binding to form amide bonds with immune aggregates or protein antigens, while complement C4b-B isotype catalyzes the transacylation of the thioester carbonyl group to form ester bonds with carbohydrate antigens. Its function is as follows. Putative humoral mediator released following cleavage by complement proteases (C1S, MASP2 or GZMK, depending on the complement pathway). While it is strongly similar to anaphylatoxins, its role is unclear. Was reported to act as a mediator of local inflammatory process; however these effects were probably due to contamination with C3a and/C5a anaphylatoxins in biological assays. This is Complement C4-A from Mus musculus (Mouse).